The primary structure comprises 136 residues: MLQPKRMKFRKMHKGRNRGFAAGSTVAFGTYGLKAVGRGRMTARQIEAARRAMTRHVKRQGKIWIRVFPDKPITEKPLEVRQGKGKGNVEYWVCQIQPGRVLYEMEGVPENLAREAFELAAAKLPFKTTFVTRTVM.

This sequence belongs to the universal ribosomal protein uL16 family. As to quaternary structure, part of the 50S ribosomal subunit.

Binds 23S rRNA and is also seen to make contacts with the A and possibly P site tRNAs. The protein is Large ribosomal subunit protein uL16 of Alteromonas mediterranea (strain DSM 17117 / CIP 110805 / LMG 28347 / Deep ecotype).